The chain runs to 192 residues: Orotate phosphoribosyltransferase (192 aa).

Residues Arg101, Lys102, Lys105, His107, and 129 to 137 (EDVITTGGS) contribute to the 5-phospho-alpha-D-ribose 1-diphosphate site. Orotate contacts are provided by Thr133 and Arg161.

It belongs to the purine/pyrimidine phosphoribosyltransferase family. PyrE subfamily. As to quaternary structure, homodimer. Mg(2+) serves as cofactor.

The catalysed reaction is orotidine 5'-phosphate + diphosphate = orotate + 5-phospho-alpha-D-ribose 1-diphosphate. The protein operates within pyrimidine metabolism; UMP biosynthesis via de novo pathway; UMP from orotate: step 1/2. Functionally, catalyzes the transfer of a ribosyl phosphate group from 5-phosphoribose 1-diphosphate to orotate, leading to the formation of orotidine monophosphate (OMP). The protein is Orotate phosphoribosyltransferase of Sorangium cellulosum (strain So ce56) (Polyangium cellulosum (strain So ce56)).